We begin with the raw amino-acid sequence, 95 residues long: UPF0473 protein GWCH70_2487 (95 aa).

The protein belongs to the UPF0473 family.

The protein is UPF0473 protein GWCH70_2487 of Geobacillus sp. (strain WCH70).